Consider the following 233-residue polypeptide: C-type lectin domain-containing protein 87 (233 aa).

A signal peptide spans 1–19; the sequence is MRFCLLVAFILPGLFLVHA. Serine 31 is a glycosylation site (O-linked (Xyl...) (chondroitin sulfate) serine). Residue asparagine 81 is glycosylated (N-linked (GlcNAc...) asparagine). One can recognise a C-type lectin domain in the interval 93 to 223; it reads FADSCYWIEK…CTYMLYSICE (131 aa). Disulfide bonds link cysteine 114–cysteine 222 and cysteine 193–cysteine 214. Asparagine 225 carries N-linked (GlcNAc...) asparagine glycosylation.

The polypeptide is C-type lectin domain-containing protein 87 (Caenorhabditis elegans).